An 80-amino-acid polypeptide reads, in one-letter code: Protein FAM229B (80 aa).

Residues 1–45 form a disordered region; sequence MPFRFGTQPRRFPVEGGDSSIELESGLSSSASCTGKETSPNRQLR. Low complexity predominate over residues 15–32; sequence EGGDSSIELESGLSSSAS. Over residues 33–42 the composition is skewed to polar residues; sequence CTGKETSPNR.

Belongs to the FAM229 family.

The sequence is that of Protein FAM229B (Fam229b) from Mus musculus (Mouse).